The chain runs to 1857 residues: Fatty acid synthase subunit alpha (1857 aa).

Residues 96–132 (EEEPEATEPAPSATPAAPAAAPAAGAPPPPPSAGPAA) are disordered. The span at 102-119 (TEPAPSATPAAPAAAPAA) shows a compositional bias: low complexity. Positions 139–214 (VTAVDILRTL…ASMQATFNGQ (76 aa)) constitute a Carrier domain. Ser174 carries the post-translational modification O-(pantetheine 4'-phosphoryl)serine. Residues 577–604 (QIIPQENGHSKKGGRSAAKRNTPTRPGK) are disordered. The segment at 648-845 (KNVLMTGAGA…GAVIGWTRGT (198 aa)) is beta-ketoacyl reductase. The region spanning 1092–1633 (LQEIVIQEDL…QKGAQVIGIH (542 aa)) is the Ketosynthase family 3 (KS3) domain. Residues Cys1275, His1518, and His1559 each act as for beta-ketoacyl synthase activity in the active site. Asp1743, Val1744, and Glu1745 together coordinate Mg(2+). Residues 1743 to 1745 (DVE), Tyr1769, Ser1779, 1788 to 1798 (EAVFKSLGVSS), 1812 to 1815 (VDAN), and 1842 to 1844 (ISH) contribute to the acetyl-CoA site. 2 residues coordinate Mg(2+): Ser1843 and His1844.

The protein belongs to the thiolase-like superfamily. Fungal fatty acid synthetase subunit alpha family. [Alpha(6)beta(6)] hexamers of two multifunctional subunits (alpha and beta).

It carries out the reaction acetyl-CoA + n malonyl-CoA + 2n NADPH + 4n H(+) = a long-chain-acyl-CoA + n CoA + n CO2 + 2n NADP(+).. The catalysed reaction is a fatty acyl-[ACP] + malonyl-[ACP] + H(+) = a 3-oxoacyl-[ACP] + holo-[ACP] + CO2. It catalyses the reaction a (3R)-hydroxyacyl-[ACP] + NADP(+) = a 3-oxoacyl-[ACP] + NADPH + H(+). Its function is as follows. Fatty acid synthetase catalyzes the formation of long-chain fatty acids from acetyl-CoA, malonyl-CoA and NADPH. The alpha subunit contains domains for: acyl carrier protein, 3-oxoacyl-[acyl-carrier-protein] reductase, and 3-oxoacyl-[acyl-carrier-protein] synthase. In Penicillium patulum (Penicillium griseofulvum), this protein is Fatty acid synthase subunit alpha (FAS2).